Reading from the N-terminus, the 545-residue chain is RNA-directed RNA polymerase beta chain (545 aa).

The region spanning 243 to 373 is the RdRp catalytic domain; sequence RLAQQGSVDG…PNLRKTFVSG (131 aa).

Part of the viral RNA-dependent RNA polymerase complex, the other subunits are probably the host ribosomal protein S1, EF-Tu and EF-Ts.

The catalysed reaction is RNA(n) + a ribonucleoside 5'-triphosphate = RNA(n+1) + diphosphate. This is the catalytic subunit of the viral RNA-dependent RNA polymerase complex. This complex is involved in viral RNA replication that produces (+)-stranded genomes via a complementary, (-)-stranded intermediate. In Escherichia coli (Bacteriophage MS2), this protein is RNA-directed RNA polymerase beta chain.